Consider the following 193-residue polypeptide: CD70 antigen (193 aa).

Residues 1-17 (MPEEGSGCSVRRRPYGC) lie on the Cytoplasmic side of the membrane. A helical; Signal-anchor for type II membrane protein membrane pass occupies residues 18–38 (VLRAALVPLVAGLVICLVVCI). Residues 39 to 193 (QRFAQAQQQL…TFFGVQWVRP (155 aa)) lie on the Extracellular side of the membrane. Residues 56-191 (DVAELQLNHT…DETFFGVQWV (136 aa)) enclose the THD domain. A glycan (N-linked (GlcNAc...) asparagine) is linked at N63. 2 disulfide bridges follow: C115/C151 and C133/C168. A glycan (N-linked (GlcNAc...) asparagine) is linked at N170.

It belongs to the tumor necrosis factor family. As to quaternary structure, homotrimer. In terms of processing, N-glycosylated.

It localises to the cell membrane. In terms of biological role, expressed at the plasma membrane of B cells, it is the ligand of the CD27 receptor which is specifically expressed at the surface of T cells. The CD70-CD27 signaling pathway mediates antigen-specific T cell activation and expansion which in turn provides immune surveillance of B cells. The polypeptide is CD70 antigen (Homo sapiens (Human)).